The following is a 217-amino-acid chain: Ranaspumin (217 aa).

Disulfide bonds link C18/C67, C38/C114, C125/C168, and C146/C207.

As to quaternary structure, monomer. Exclusively expressed in females in the early oviduct, the glandular part of the oviduct (pars convoluta dilata) and in the cloaca.

It localises to the secreted. In terms of biological role, acts as a surfactant. Is the major protein constituent (45%) of foam nests. Has no antimicrobial activity, no larvicidal activity, and is not toxic to mice. This Leptodactylus vastus (Northeastern pepper frog) protein is Ranaspumin.